A 219-amino-acid chain; its full sequence is Thiamine-phosphate synthase (219 aa).

Residues 48–52 (QFRQK) and Asn-84 contribute to the 4-amino-2-methyl-5-(diphosphooxymethyl)pyrimidine site. The Mg(2+) site is built by Asp-85 and Asp-104. Ser-123 provides a ligand contact to 4-amino-2-methyl-5-(diphosphooxymethyl)pyrimidine. A 2-[(2R,5Z)-2-carboxy-4-methylthiazol-5(2H)-ylidene]ethyl phosphate-binding site is contributed by 150-152 (TPS). Lys-153 provides a ligand contact to 4-amino-2-methyl-5-(diphosphooxymethyl)pyrimidine. Residues Gly-181 and 199 to 200 (IS) contribute to the 2-[(2R,5Z)-2-carboxy-4-methylthiazol-5(2H)-ylidene]ethyl phosphate site.

Belongs to the thiamine-phosphate synthase family. Requires Mg(2+) as cofactor.

The catalysed reaction is 2-[(2R,5Z)-2-carboxy-4-methylthiazol-5(2H)-ylidene]ethyl phosphate + 4-amino-2-methyl-5-(diphosphooxymethyl)pyrimidine + 2 H(+) = thiamine phosphate + CO2 + diphosphate. It carries out the reaction 2-(2-carboxy-4-methylthiazol-5-yl)ethyl phosphate + 4-amino-2-methyl-5-(diphosphooxymethyl)pyrimidine + 2 H(+) = thiamine phosphate + CO2 + diphosphate. The enzyme catalyses 4-methyl-5-(2-phosphooxyethyl)-thiazole + 4-amino-2-methyl-5-(diphosphooxymethyl)pyrimidine + H(+) = thiamine phosphate + diphosphate. It functions in the pathway cofactor biosynthesis; thiamine diphosphate biosynthesis; thiamine phosphate from 4-amino-2-methyl-5-diphosphomethylpyrimidine and 4-methyl-5-(2-phosphoethyl)-thiazole: step 1/1. Its function is as follows. Condenses 4-methyl-5-(beta-hydroxyethyl)thiazole monophosphate (THZ-P) and 2-methyl-4-amino-5-hydroxymethyl pyrimidine pyrophosphate (HMP-PP) to form thiamine monophosphate (TMP). This is Thiamine-phosphate synthase from Helicobacter pylori (strain ATCC 700392 / 26695) (Campylobacter pylori).